The sequence spans 76 residues: uncharacterized protein (76 aa).

The protein resides in the plastid. This is an uncharacterized protein from Euglena longa (Euglenophycean alga).